A 680-amino-acid chain; its full sequence is Cytosolic endo-beta-N-acetylglucosaminidase 1 (680 aa).

Pro residues predominate over residues 1 to 15 (MSVAPPAPSPPPFDP). The interval 1–21 (MSVAPPAPSPPPFDPTKPSTP) is disordered.

Belongs to the glycosyl hydrolase 85 family.

The protein resides in the cytoplasm. It localises to the cytosol. The enzyme catalyses an N(4)-(oligosaccharide-(1-&gt;3)-[oligosaccharide-(1-&gt;6)]-beta-D-Man-(1-&gt;4)-beta-D-GlcNAc-(1-&gt;4)-alpha-D-GlcNAc)-L-asparaginyl-[protein] + H2O = an oligosaccharide-(1-&gt;3)-[oligosaccharide-(1-&gt;6)]-beta-D-Man-(1-&gt;4)-D-GlcNAc + N(4)-(N-acetyl-beta-D-glucosaminyl)-L-asparaginyl-[protein]. In terms of biological role, endoglycosidase that releases N-glycans from glycoproteins by cleaving the beta-1,4-glycosidic bond in the N,N'-diacetylchitobiose core. Involved in the production of high-mannose type N-glycans during plant development and fruit maturation. The chain is Cytosolic endo-beta-N-acetylglucosaminidase 1 from Arabidopsis thaliana (Mouse-ear cress).